We begin with the raw amino-acid sequence, 136 residues long: ATP synthase epsilon chain (136 aa).

A disordered region spans residues 100–120 (QGALEEANRGEDKPNQLKASN). A compositionally biased stretch (basic and acidic residues) spans 105–114 (EANRGEDKPN).

This sequence belongs to the ATPase epsilon chain family. F-type ATPases have 2 components, CF(1) - the catalytic core - and CF(0) - the membrane proton channel. CF(1) has five subunits: alpha(3), beta(3), gamma(1), delta(1), epsilon(1). CF(0) has three main subunits: a, b and c.

It localises to the cellular thylakoid membrane. Its function is as follows. Produces ATP from ADP in the presence of a proton gradient across the membrane. The chain is ATP synthase epsilon chain (atpC) from Synechocystis sp. (strain ATCC 27184 / PCC 6803 / Kazusa).